A 617-amino-acid polypeptide reads, in one-letter code: Protein AsmA (617 aa).

The Cytoplasmic portion of the chain corresponds to M1–R3. The helical transmembrane segment at F4–L24 threads the bilayer. Residues L25–M617 lie on the Periplasmic side of the membrane. Polar residues predominate over residues T302–L319. The disordered stretch occupies residues T302–R321.

Belongs to the AsmA family.

It localises to the cell inner membrane. Functionally, could be involved in the assembly of outer membrane proteins. May indirectly influence the assembly of outer membrane proteins, potentially by altering outer membrane fluidity. Inhibits the assembly of mutant forms of outer membrane protein F (OmpF). The protein is Protein AsmA of Escherichia coli (strain K12).